Here is a 105-residue protein sequence, read N- to C-terminus: ATP synthase subunit c (105 aa).

The next 2 helical transmembrane spans lie at 37 to 57 (IGAG…GYIF) and 82 to 102 (SAIS…LIFV).

This sequence belongs to the ATPase C chain family. In terms of assembly, F-type ATPases have 2 components, F(1) - the catalytic core - and F(0) - the membrane proton channel. F(1) has five subunits: alpha(3), beta(3), gamma(1), delta(1), epsilon(1). F(0) has three main subunits: a(1), b(2) and c(10-14). The alpha and beta chains form an alternating ring which encloses part of the gamma chain. F(1) is attached to F(0) by a central stalk formed by the gamma and epsilon chains, while a peripheral stalk is formed by the delta and b chains.

It localises to the cell membrane. Functionally, f(1)F(0) ATP synthase produces ATP from ADP in the presence of a proton or sodium gradient. F-type ATPases consist of two structural domains, F(1) containing the extramembraneous catalytic core and F(0) containing the membrane proton channel, linked together by a central stalk and a peripheral stalk. During catalysis, ATP synthesis in the catalytic domain of F(1) is coupled via a rotary mechanism of the central stalk subunits to proton translocation. Key component of the F(0) channel; it plays a direct role in translocation across the membrane. A homomeric c-ring of between 10-14 subunits forms the central stalk rotor element with the F(1) delta and epsilon subunits. The chain is ATP synthase subunit c from Mycoplasma pneumoniae (strain ATCC 29342 / M129 / Subtype 1) (Mycoplasmoides pneumoniae).